The primary structure comprises 144 residues: Large ribosomal subunit protein uL15 (144 aa).

Residues 1-54 are disordered; sequence MRLNTLSPAAGSKHAPKRVGRGMGSGLGKTAGRGHKGQKSRSGGGVRPGFEGGQ. Gly residues-rich tracts occupy residues 21-31 and 42-52; these read RGMGSGLGKTA and SGGGVRPGFEG.

This sequence belongs to the universal ribosomal protein uL15 family. Part of the 50S ribosomal subunit.

Functionally, binds to the 23S rRNA. This is Large ribosomal subunit protein uL15 from Shewanella baltica (strain OS223).